The following is a 344-amino-acid chain: Putative [LysW]-lysine/[LysW]-ornithine hydrolase (344 aa).

Residue histidine 66 participates in Zn(2+) binding. Aspartate 68 is an active-site residue. Aspartate 90 is a Zn(2+) binding site. Glutamate 117 (proton acceptor) is an active-site residue. Residues glutamate 118, glutamate 139, and histidine 297 each coordinate Zn(2+).

The protein belongs to the peptidase M20A family. LysK subfamily. It depends on Zn(2+) as a cofactor. Co(2+) serves as cofactor.

The protein localises to the cytoplasm. It carries out the reaction [amino-group carrier protein]-C-terminal-gamma-(L-lysyl)-L-glutamate + H2O = [amino-group carrier protein]-C-terminal-L-glutamate + L-lysine. The enzyme catalyses [amino-group carrier protein]-C-terminal-gamma-(L-ornithyl)-L-glutamate + H2O = [amino-group carrier protein]-C-terminal-L-glutamate + L-ornithine. It functions in the pathway amino-acid biosynthesis; L-lysine biosynthesis via AAA pathway; L-lysine from L-alpha-aminoadipate (Thermus route): step 5/5. It participates in amino-acid biosynthesis; L-arginine biosynthesis. Functionally, catalyzes the release of L-lysine from [LysW]-gamma-L-lysine and the release of L-ornithine from [LysW]-L-ornithine. This chain is Putative [LysW]-lysine/[LysW]-ornithine hydrolase, found in Thermococcus kodakarensis (strain ATCC BAA-918 / JCM 12380 / KOD1) (Pyrococcus kodakaraensis (strain KOD1)).